Consider the following 420-residue polypeptide: UDP-N-acetylglucosamine 1-carboxyvinyltransferase (420 aa).

A phosphoenolpyruvate-binding site is contributed by 22 to 23 (KN). A UDP-N-acetyl-alpha-D-glucosamine-binding site is contributed by Arg-91. Residue Cys-115 is the Proton donor of the active site. A 2-(S-cysteinyl)pyruvic acid O-phosphothioketal modification is found at Cys-115. UDP-N-acetyl-alpha-D-glucosamine-binding positions include 120 to 124 (RPVDL), 160 to 163 (KVSV), Asp-305, and Ile-327.

It belongs to the EPSP synthase family. MurA subfamily.

It localises to the cytoplasm. The enzyme catalyses phosphoenolpyruvate + UDP-N-acetyl-alpha-D-glucosamine = UDP-N-acetyl-3-O-(1-carboxyvinyl)-alpha-D-glucosamine + phosphate. The protein operates within cell wall biogenesis; peptidoglycan biosynthesis. Cell wall formation. Adds enolpyruvyl to UDP-N-acetylglucosamine. The polypeptide is UDP-N-acetylglucosamine 1-carboxyvinyltransferase (Pectobacterium carotovorum subsp. carotovorum (strain PC1)).